Reading from the N-terminus, the 79-residue chain is Translational regulator CsrA (79 aa).

It belongs to the CsrA/RsmA family. Homodimer; the beta-strands of each monomer intercalate to form a hydrophobic core, while the alpha-helices form wings that extend away from the core.

The protein resides in the cytoplasm. Its function is as follows. A translational regulator that binds mRNA to regulate translation initiation and/or mRNA stability. Usually binds in the 5'-UTR at or near the Shine-Dalgarno sequence preventing ribosome-binding, thus repressing translation. Its main target seems to be the major flagellin gene, while its function is anatagonized by FliW. The protein is Translational regulator CsrA of Helicobacter hepaticus (strain ATCC 51449 / 3B1).